Consider the following 584-residue polypeptide: Aspartate--tRNA(Asp/Asn) ligase (584 aa).

Glu174 is a binding site for L-aspartate. Residues Gln198–Lys201 form an aspartate region. Arg220 serves as a coordination point for L-aspartate. ATP-binding positions include Arg220–Glu222 and Gln229. His447 contributes to the L-aspartate binding site. Residue Glu480 coordinates ATP. Arg487 contributes to the L-aspartate binding site. Gly532–Arg535 lines the ATP pocket.

The protein belongs to the class-II aminoacyl-tRNA synthetase family. Type 1 subfamily. In terms of assembly, homodimer.

The protein resides in the cytoplasm. The catalysed reaction is tRNA(Asx) + L-aspartate + ATP = L-aspartyl-tRNA(Asx) + AMP + diphosphate. Aspartyl-tRNA synthetase with relaxed tRNA specificity since it is able to aspartylate not only its cognate tRNA(Asp) but also tRNA(Asn). Reaction proceeds in two steps: L-aspartate is first activated by ATP to form Asp-AMP and then transferred to the acceptor end of tRNA(Asp/Asn). The polypeptide is Aspartate--tRNA(Asp/Asn) ligase (Endomicrobium trichonymphae).